Consider the following 377-residue polypeptide: MSNSIVIIGSGFAARQLVKNIRKQDASIPLTLIAADSMDEYNKPDLSHVISQGQRADDLTRQTAGEFAEQFNLRLFPHTWVTDIDAEAHVVKSQNNQWQYDKLVLATGASAFVPPVPGRELMLTLNSQQEYRACETQLRDARRVLIVGGGLIGSELAMDFCRAGKAVTLIDNAASILASLMPPEVSSRLQHRLTEMGVHLLLKSQLQGLEKTDSGILATLECQRCIEVDAVIAATGLRPETALARRAGLTINRGVCVDSYLQTSNADIYALGDCAEINGQVLPFLQPIQLSAMVLAKNLLGNNTPLKLPAMLVKIKTPELPLHLAGETQRQDLRWQINTERQGMVARGVDDADQLRAFVVSEDRMKEAFGLLKTLPM.

Belongs to the FAD-dependent oxidoreductase family. It depends on FAD as a cofactor.

It localises to the cytoplasm. It carries out the reaction 2 reduced [nitric oxide reductase rubredoxin domain] + NAD(+) + H(+) = 2 oxidized [nitric oxide reductase rubredoxin domain] + NADH. Its pathway is nitrogen metabolism; nitric oxide reduction. In terms of biological role, one of at least two accessory proteins for anaerobic nitric oxide (NO) reductase. Reduces the rubredoxin moiety of NO reductase. The sequence is that of Nitric oxide reductase FlRd-NAD(+) reductase from Escherichia coli (strain SMS-3-5 / SECEC).